Here is a 629-residue protein sequence, read N- to C-terminus: Endoglucanase 15 (629 aa).

Positions 1 to 30 (MAKNGGAHGAATLFGLLALASMVKLGFVAG) are cleaved as a signal peptide. The Nucleophile role is filled by Asp-87. Catalysis depends on residues His-421, Asp-473, and Glu-482. Residues Asn-520, Asn-540, and Asn-561 are each glycosylated (N-linked (GlcNAc...) asparagine).

It belongs to the glycosyl hydrolase 9 (cellulase E) family.

Its subcellular location is the secreted. The enzyme catalyses Endohydrolysis of (1-&gt;4)-beta-D-glucosidic linkages in cellulose, lichenin and cereal beta-D-glucans.. This is Endoglucanase 15 from Oryza sativa subsp. japonica (Rice).